Here is a 355-residue protein sequence, read N- to C-terminus: Daphnetin O-methyltransferase 1 (355 aa).

S-adenosyl-L-homocysteine-binding residues include Asp-222, Asp-242, and Lys-256. His-260 functions as the Proton acceptor in the catalytic mechanism.

This sequence belongs to the class I-like SAM-binding methyltransferase superfamily. Cation-independent O-methyltransferase family. COMT subfamily.

The catalysed reaction is 7,8-dihydroxycoumarin + S-adenosyl-L-methionine = 7-hydroxy-8-methoxycoumarin + S-adenosyl-L-homocysteine + H(+). Its pathway is aromatic compound metabolism. The protein operates within secondary metabolite biosynthesis. O-methyltransferase involved in the biosynthesis of coumarins natural products such as daphnetin derivatives. Catalyzes specifically the methylation of daphnetin (7,8-dihydroxycoumarin) to produce hydrangetin (7-hydroxy-8-methoxycoumarin). Probably involved in acclimation to low temperature conditions. The polypeptide is Daphnetin O-methyltransferase 1 (Secale cereale (Rye)).